The following is a 338-amino-acid chain: Ketol-acid reductoisomerase (NADP(+)) (338 aa).

Positions 1–181 (MKVFYDKDCD…GGGRTGIIET (181 aa)) constitute a KARI N-terminal Rossmann domain. NADP(+) contacts are provided by residues 24–27 (YGSQ), Arg47, Ser50, Thr52, and 82–85 (DEFQ). Residue His107 is part of the active site. Gly133 is an NADP(+) binding site. Residues 182-327 (TFKDETETDL…EKLRSMMPWI (146 aa)) enclose the KARI C-terminal knotted domain. Residues Asp190, Glu194, Glu226, and Glu230 each coordinate Mg(2+). A substrate-binding site is contributed by Ser251.

It belongs to the ketol-acid reductoisomerase family. It depends on Mg(2+) as a cofactor.

The catalysed reaction is (2R)-2,3-dihydroxy-3-methylbutanoate + NADP(+) = (2S)-2-acetolactate + NADPH + H(+). It catalyses the reaction (2R,3R)-2,3-dihydroxy-3-methylpentanoate + NADP(+) = (S)-2-ethyl-2-hydroxy-3-oxobutanoate + NADPH + H(+). It participates in amino-acid biosynthesis; L-isoleucine biosynthesis; L-isoleucine from 2-oxobutanoate: step 2/4. Its pathway is amino-acid biosynthesis; L-valine biosynthesis; L-valine from pyruvate: step 2/4. In terms of biological role, involved in the biosynthesis of branched-chain amino acids (BCAA). Catalyzes an alkyl-migration followed by a ketol-acid reduction of (S)-2-acetolactate (S2AL) to yield (R)-2,3-dihydroxy-isovalerate. In the isomerase reaction, S2AL is rearranged via a Mg-dependent methyl migration to produce 3-hydroxy-3-methyl-2-ketobutyrate (HMKB). In the reductase reaction, this 2-ketoacid undergoes a metal-dependent reduction by NADPH to yield (R)-2,3-dihydroxy-isovalerate. This chain is Ketol-acid reductoisomerase (NADP(+)), found in Pseudomonas syringae pv. tomato (strain ATCC BAA-871 / DC3000).